A 493-amino-acid chain; its full sequence is Solute carrier family 2, facilitated glucose transporter member 3 (493 aa).

The Cytoplasmic segment spans residues 1 to 10 (MGTTKVTPSL). A helical membrane pass occupies residues 11 to 32 (VFAVTVATIGSFQFGYNTGVIN). The Extracellular segment spans residues 33-64 (APETILKDFLNYTLEERLEDLPSEGLLTALWS). The N-linked (GlcNAc...) asparagine glycan is linked to Asn43. Residues 65–85 (LCVAIFSVGGMIGSFSVGLFV) traverse the membrane as a helical segment. The Cytoplasmic segment spans residues 86–90 (NRFGR). The helical transmembrane segment at 91–111 (RNSMLLVNLLAIIAGCLMGFA) threads the bilayer. Over 112–118 (KIAESVE) the chain is Extracellular. The helical transmembrane segment at 119 to 142 (MLILGRLLIGIFCGLCTGFVPMYI) threads the bilayer. Over 143 to 153 (GEVSPTALRGA) the chain is Cytoplasmic. The helical transmembrane segment at 154-174 (FGTLNQLGIVVGILVAQIFGL) threads the bilayer. Gln159 provides a ligand contact to D-glucose. Residues 175 to 183 (DFILGSEEL) lie on the Extracellular side of the membrane. A helical transmembrane segment spans residues 184–204 (WPGLLGLTIIPAILQSAALPF). Topologically, residues 205–269 (CPESPRFLLI…LFRSPNYVQP (65 aa)) are cytoplasmic. A Phosphothreonine modification is found at Thr232. The helical transmembrane segment at 270 to 290 (LLISIVLQLSQQLSGINAVFY) threads the bilayer. The segment at 277 to 279 (QLS) is important for selectivity against fructose. D-glucose contacts are provided by residues 280–281 (QQ) and Asn286. The Extracellular portion of the chain corresponds to 291–304 (YSTGIFKDAGVQEP). The chain crosses the membrane as a helical span at residues 305-325 (IYATIGAGVVNTIFTVVSLFL). Asn315 contributes to the D-glucose binding site. The Cytoplasmic portion of the chain corresponds to 326–331 (VERAGR). The helical transmembrane segment at 332–352 (RTLHMIGLGGMAVCSVFMTIS) threads the bilayer. Residues 353–363 (LLLKDDYEAMS) lie on the Extracellular side of the membrane. Residues 364-389 (FVCIVAILIYVAFFEIGPGPIPWFIV) form a helical membrane-spanning segment. D-glucose-binding residues include Glu378 and Trp386. Residues 390–399 (AELFSQGPRP) are Cytoplasmic-facing. A helical membrane pass occupies residues 400–420 (AAIAVAGCCNWTSNFLVGMLF). Residues 421–429 (PSAAAYLGA) are Extracellular-facing. The helical transmembrane segment at 430–450 (YVFIIFAAFLIFFLIFTFFKV) threads the bilayer. The Cytoplasmic portion of the chain corresponds to 451–493 (PETKGRTFEDIARAFEGQAHSGKGPAGVELNSMQPVKETPGNA). Residues 469–493 (AHSGKGPAGVELNSMQPVKETPGNA) form a disordered region. Phosphoserine is present on residues Ser471 and Ser482. Residue Thr489 is modified to Phosphothreonine.

It belongs to the major facilitator superfamily. Sugar transporter (TC 2.A.1.1) family. Glucose transporter subfamily. As to quaternary structure, interacts with SMIM43; the interaction may promote SLC2A3-mediated glucose transport to meet the energy needs of mesendoderm differentiation. In terms of tissue distribution, expressed in spermatozoa (at protein level). Detected in brain (at protein level). Abundantly expressed in the hippocampus, cerebellum and cerebral cortex with lower expression in the dentate gyrus and piriform cortex.

The protein resides in the cell membrane. The protein localises to the perikaryon. It is found in the cell projection. The enzyme catalyses D-glucose(out) = D-glucose(in). The catalysed reaction is D-galactose(in) = D-galactose(out). With respect to regulation, deoxyglucose transport is inhibited by D-glucose, D-galactose and maltose. Galactose transport is inhibited by D-glucose and maltose. Its function is as follows. Facilitative glucose transporter. Can also mediate the uptake of various other monosaccharides across the cell membrane. Mediates the uptake of glucose, 2-deoxyglucose, galactose, mannose, xylose and fucose, and probably also dehydroascorbate. Does not mediate fructose transport. Required for mesendoderm differentiation. The polypeptide is Solute carrier family 2, facilitated glucose transporter member 3 (Mus musculus (Mouse)).